A 198-amino-acid chain; its full sequence is Na(+)-translocating NADH-quinone reductase subunit E (198 aa).

6 helical membrane passes run 11-31 (SIFI…FLAV), 39-59 (FGLG…NNLV), 77-97 (FLSF…LEMI), 110-130 (GIFL…SFMV), 140-160 (VVYG…LAGI), and 176-196 (LGIT…FSGV).

It belongs to the NqrDE/RnfAE family. Composed of six subunits; NqrA, NqrB, NqrC, NqrD, NqrE and NqrF.

It localises to the cell inner membrane. It catalyses the reaction a ubiquinone + n Na(+)(in) + NADH + H(+) = a ubiquinol + n Na(+)(out) + NAD(+). NQR complex catalyzes the reduction of ubiquinone-1 to ubiquinol by two successive reactions, coupled with the transport of Na(+) ions from the cytoplasm to the periplasm. NqrA to NqrE are probably involved in the second step, the conversion of ubisemiquinone to ubiquinol. This is Na(+)-translocating NADH-quinone reductase subunit E from Aliivibrio fischeri (strain ATCC 700601 / ES114) (Vibrio fischeri).